The primary structure comprises 460 residues: Kynurenine 3-monooxygenase (460 aa).

Residues Val-13, 32–34 (DFR), and Ala-53 contribute to the FAD site. The L-kynurenine site is built by Arg-83 and Tyr-97. FAD is bound by residues Arg-109, Leu-133, Tyr-195, Asp-314, and 325–328 (QGMN). L-kynurenine contacts are provided by Asn-373 and Tyr-408.

It belongs to the aromatic-ring hydroxylase family. KMO subfamily. FAD is required as a cofactor.

The protein resides in the mitochondrion outer membrane. The catalysed reaction is L-kynurenine + NADPH + O2 + H(+) = 3-hydroxy-L-kynurenine + NADP(+) + H2O. It functions in the pathway cofactor biosynthesis; NAD(+) biosynthesis; quinolinate from L-kynurenine: step 1/3. Catalyzes the hydroxylation of L-kynurenine (L-Kyn) to form 3-hydroxy-L-kynurenine (L-3OHKyn). Required for synthesis of quinolinic acid. This Saccharomyces cerevisiae (strain ATCC 204508 / S288c) (Baker's yeast) protein is Kynurenine 3-monooxygenase.